We begin with the raw amino-acid sequence, 417 residues long: Serine hydroxymethyltransferase (417 aa).

Lys54 carries the post-translational modification N6-acetyllysine. Residues Leu121 and 125-127 (GHL) contribute to the (6S)-5,6,7,8-tetrahydrofolate site. Lys229 is modified (N6-(pyridoxal phosphate)lysine). An N6-acetyllysine mark is found at Lys250, Lys285, and Lys354. 355–357 (SPF) contacts (6S)-5,6,7,8-tetrahydrofolate. N6-acetyllysine is present on Lys375.

The protein belongs to the SHMT family. As to quaternary structure, homodimer. Pyridoxal 5'-phosphate is required as a cofactor.

It localises to the cytoplasm. The catalysed reaction is (6R)-5,10-methylene-5,6,7,8-tetrahydrofolate + glycine + H2O = (6S)-5,6,7,8-tetrahydrofolate + L-serine. It participates in one-carbon metabolism; tetrahydrofolate interconversion. Its pathway is amino-acid biosynthesis; glycine biosynthesis; glycine from L-serine: step 1/1. Its function is as follows. Catalyzes the reversible interconversion of serine and glycine with tetrahydrofolate (THF) serving as the one-carbon carrier. This reaction serves as the major source of one-carbon groups required for the biosynthesis of purines, thymidylate, methionine, and other important biomolecules. Also exhibits THF-independent aldolase activity toward beta-hydroxyamino acids, producing glycine and aldehydes, via a retro-aldol mechanism. This Shigella dysenteriae serotype 1 (strain Sd197) protein is Serine hydroxymethyltransferase.